A 310-amino-acid polypeptide reads, in one-letter code: CCR4-NOT transcription complex subunit 7 (310 aa).

4 residues coordinate a divalent metal cation: aspartate 51, glutamate 53, aspartate 172, and aspartate 245.

The protein belongs to the CAF1 family. Component of the CCR4-NOT complex at least composed of ccf-1, ccr-4 and let-711, which is required for germ cell development in hermaphrodites. Within the complex interacts with let-711. As to expression, highly expressed in the germline. In particular, highly expressed in germ cells that enter meiosis and progress through the pachytene stage.

The protein localises to the nucleus. The protein resides in the cytoplasm. The catalysed reaction is Exonucleolytic cleavage of poly(A) to 5'-AMP.. Functionally, catalytic component of the CCR4-NOT complex which is one of the major cellular mRNA deadenylases and is linked to various cellular processes including bulk mRNA degradation, miRNA-mediated repression, translational repression during translational initiation and general transcription regulation. Within the complex, plays a role in miRNA-mediated deadenylation in embryos. Within the complex promotes germ cell development and fertility in hermaphrodites. Additional complex functions may be a consequence of its influence on mRNA expression. This is CCR4-NOT transcription complex subunit 7 from Caenorhabditis elegans.